A 427-amino-acid polypeptide reads, in one-letter code: Cyclin-L1-1 (427 aa).

A disordered region spans residues 258-427; it reads HRRTSDTNAS…SRDKDRHRRQ (170 aa). Residues 263-276 show a composition bias toward polar residues; it reads DTNASKESPATTVA. Basic and acidic residues-rich tracts occupy residues 289–311, 328–382, 390–400, and 407–421; these read QEKD…DDGK, KSEK…DRDR, DRSSGYSDKEK, and RDRG…SRDK.

The protein belongs to the cyclin family. Cyclin L subfamily.

In Oryza sativa subsp. japonica (Rice), this protein is Cyclin-L1-1 (CYCL1-1).